The primary structure comprises 599 residues: EASSVVNPENTFFSVKRFIGRKMTEVDEESKQVSYTVVRDENNNVKLECPAIGKQFAAEEISAQVLRKLVDDASKFLNDKVTKAVVTVPAYFNDSQRTATKDAGRIAGLEVLRIINEPTAASLAYGFEKKNNETILVFDLGGGTFDVSVLEVGDGVFEVLSTSGDTHLGGDDFDKRIVDWLASSFKRDEGIDLLKDKQALQRLTETAEKAKMELSSLTQANISLPFITATADGPKHIETTLTRAKFEELWSDLLDRLRTPVENSLRDAKLSFSDLDEVILVGGSTRIPAVIELVKKMTGKAPNVTVNPDEVVALGAAVQAGVLAGDVSDIVLLDVTPLSIGLETLGGVMTKIIPRNTTLPTSKSEVFSTAADGQTSVEINVLQGEREFVRDNKSLGSFRLDGIPPAPRGVPQVEVKFDIDANGILSVTAIDKGTGKKQDITITGASTLPGDEVERMVSEAEKFAKEDKEKREVIDTKNQADSVVYQTEKQLKELGEKVPVPVKEKVEAKLGELKDAINGGETQAIKDAMAALNQEVMQLGQSLYNQPGAGGEPGAAQAQHQEQSSARQIQRAKDPKEMLLMLTSQTASELVEEVVSKMH.

The disordered stretch occupies residues 545-573 (NQPGAGGEPGAAQAQHQEQSSARQIQRAK). Over residues 554-568 (GAAQAQHQEQSSARQ) the composition is skewed to low complexity.

This sequence belongs to the heat shock protein 70 family.

Its subcellular location is the plastid. The protein localises to the chloroplast stroma. Its function is as follows. Interacts with newly imported chloroplast proteins to assist in their maturation. The protein is Stromal 70 kDa heat shock-related protein, chloroplastic (CHSP70) of Spinacia oleracea (Spinach).